A 727-amino-acid polypeptide reads, in one-letter code: Cyclin-T1 (727 aa).

Ser117 carries the post-translational modification Phosphoserine. The short motif at 253 to 270 (KRIWNWRAWQADRKTKAD) is the Nuclear localization signal element. Residue Lys343 forms a Glycyl lysine isopeptide (Lys-Gly) (interchain with G-Cter in SUMO2) linkage. The residue at position 389 (Ser389) is a Phosphoserine. A coiled-coil region spans residues 389-420 (SLKEYRAKHAEELAAQKRQLENMEANVKSQYA). Lys391 carries the post-translational modification N6-acetyllysine. Lys416 participates in a covalent cross-link: Glycyl lysine isopeptide (Lys-Gly) (interchain with G-Cter in SUMO2). ADP-ribosylserine is present on residues Ser417 and Ser475. Residues 481–551 (IKMRIKVHTA…RLGDPKHSSQ (71 aa)) form a histidine-rich domain (HRD) region. Lys482 participates in a covalent cross-link: Glycyl lysine isopeptide (Lys-Gly) (interchain with G-Cter in SUMO2). Lys486 carries the post-translational modification N6-(ADP-ribosyl)lysine. Positions 487–507 (VHTAADKHNSVDDSVTKNREH) are enriched in basic and acidic residues. Disordered stretches follow at residues 487–631 (VHTA…QPSC) and 691–727 (YMNP…PLPK). Position 488 is an ADP-ribosylhistidine (His488). Phosphoserine is present on residues Ser496 and Ser500. Positions 508–531 (KEKHKTHPSNHHHHHNHHSHKHSH) are enriched in basic residues. His531 is modified (ADP-ribosylhistidine). Ser532, Ser550, and Ser553 each carry ADP-ribosylserine. ADP-ribosylhistidine is present on His557. Residues 561–571 (SLSSSFSSSSS) are compositionally biased toward low complexity. Residue Ser564 is modified to ADP-ribosylserine. The residue at position 565 (Ser565) is a Phosphoserine. Positions 616–631 (GHSSDTSGLHFSQPSC) are enriched in polar residues. Over residues 711–727 (PPPLPSEPPPPLPPLPK) the composition is skewed to pro residues.

The protein belongs to the cyclin family. Cyclin C subfamily. Cyclin-T1 is the predominant cyclin that associates with CDK9 to form a heterodimer called P-TEFb. P-TEFb forms a complex with AFF4/AF5Q31. Component of a complex which is at least composed of HTATSF1/Tat-SF1, P-TEFb complex, RNA pol II, SUPT5H, and NCL/nucleolin. Component of the 7SK snRNP complex at least composed of P-TEFb (composed of CDK9 and CCNT1/cyclin-T1), HEXIM1, HEXIM2, BCDIN3, SART3 proteins and 7SK and U6 snRNAs. Interacts (via central region) with ZMYND8 (via N-terminus); the interaction is direct and the association appears to occur between homodimeric ZMYND8 and the activated form of the P-TEFb complex. Interacts with BRD4, targets chromatin binding. Interacts with JMJD6. Interacts with MDFIC. Interacts with HSF1. Interacts with HTATSF1. Interacts with TBX21. In terms of assembly, (Microbial infection) Binds to BIV Tat, however Tat binds TAR RNA in a Cyc-T1-independent mode. Post-translationally, ADP-ribosylation on serine residues by PARP1 in response to DNA damage disrupts the phase separation activity of CCNT1, thereby preventing activation of CDK9.

The protein resides in the nucleus. In terms of biological role, regulatory subunit of the cyclin-dependent kinase pair (CDK9/cyclin-T1) complex, also called positive transcription elongation factor B (P-TEFb), which facilitates the transition from abortive to productive elongation by phosphorylating the CTD (C-terminal domain) of the large subunit of RNA polymerase II (RNA Pol II). Required to activate the protein kinase activity of CDK9: acts by mediating formation of liquid-liquid phase separation (LLPS) that enhances binding of P-TEFb to the CTD of RNA Pol II. The sequence is that of Cyclin-T1 (CCNT1) from Bos taurus (Bovine).